A 168-amino-acid chain; its full sequence is NADH-quinone oxidoreductase subunit I (168 aa).

4Fe-4S ferredoxin-type domains lie at 58-88 (LRRY…IEAG) and 99-128 (VRYD…EGPN). 8 residues coordinate [4Fe-4S] cluster: cysteine 68, cysteine 71, cysteine 74, cysteine 78, cysteine 108, cysteine 111, cysteine 114, and cysteine 118.

It belongs to the complex I 23 kDa subunit family. NDH-1 is composed of 14 different subunits. Subunits NuoA, H, J, K, L, M, N constitute the membrane sector of the complex. Requires [4Fe-4S] cluster as cofactor.

The protein resides in the cell inner membrane. The catalysed reaction is a quinone + NADH + 5 H(+)(in) = a quinol + NAD(+) + 4 H(+)(out). Functionally, NDH-1 shuttles electrons from NADH, via FMN and iron-sulfur (Fe-S) centers, to quinones in the respiratory chain. The immediate electron acceptor for the enzyme in this species is believed to be ubiquinone. Couples the redox reaction to proton translocation (for every two electrons transferred, four hydrogen ions are translocated across the cytoplasmic membrane), and thus conserves the redox energy in a proton gradient. This is NADH-quinone oxidoreductase subunit I from Bradyrhizobium diazoefficiens (strain JCM 10833 / BCRC 13528 / IAM 13628 / NBRC 14792 / USDA 110).